The primary structure comprises 397 residues: Aurora kinase A (397 aa).

The disordered stretch occupies residues 1–118 (MDRCKENCVS…SIQKTEDSKK (118 aa)). 2 stretches are compositionally biased toward polar residues: residues 29-55 (QIPS…SQRV) and 84-102 (RLSN…SGNN). A phosphoserine mark is found at S40 and S50. Residues 103–118 (SEKEQTSIQKTEDSKK) show a composition bias toward basic and acidic residues. Residues 126-376 (FDIGRPLGKG…LAEVLEHPWI (251 aa)) form the Protein kinase domain. ATP-binding positions include K136, K155, and 203 to 206 (LEYA). Catalysis depends on D249, which acts as the Proton acceptor. K251 is covalently cross-linked (Glycyl lysine isopeptide (Lys-Gly) (interchain with G-Cter in SUMO2)). Residues 253-254 (EN) and D267 contribute to the ATP site. The activation segment stretch occupies residues 273 to 286 (HAPSSRRTTLCGTL). Phosphothreonine occurs at positions 280 and 281. Position 335 is a phosphoserine; by PKA and PAK (S335). Polar residues predominate over residues 378–387 (ANSSKPPTGH). Residues 378–397 (ANSSKPPTGHNSKEATSKSS) form a disordered region. A compositionally biased stretch (basic and acidic residues) spans 388–397 (NSKEATSKSS).

This sequence belongs to the protein kinase superfamily. Ser/Thr protein kinase family. Aurora subfamily. In terms of assembly, part of a complex composed of NEDD9, AURKA and CTTN; within the complex NEDD9 acts as a scaffold protein and is required for complex formation. Identified in a complex with AUNIP and NIN. Interacts with CPEB1, JTB, TACC1, TPX2, PPP2CA, as well as with the protein phosphatase type 1 (PP1) isoforms PPP1CA, PPP1CB and PPP1CC. Also interacts with its substrates ARHGEF2, BORA, KIF2A, PARD3, and p53/TP53. Interaction with BORA promotes phosphorylation of PLK1. Interacts with FBXL7 and CIMAP3. Interacts with GADD45A, competing with its oligomerization. Interacts (via C-terminus) with AUNIP (via C-terminus). Interacts with SIRT2. Interacts with FRY; this interaction facilitates AURKA-mediated PLK1 phosphorylation. Interacts with MYCN; interaction is phospho-independent and triggers AURKA activation; AURKA competes with FBXW7 for binding to unphosphorylated MYCN but not for binding to phosphorylated MYCN. Interacts with HNRNPU. Interacts with AAAS. Interacts with KLHL18 and CUL3. Interacts with FOXP1. Interacts with HDAC6; AURKA-mediated phosphorylation of HDAC6 promotes deacetylation of alpha-tubulin. Post-translationally, activated by phosphorylation at Thr-281; this brings about a change in the conformation of the activation segment. Phosphorylation at Thr-281 varies during the cell cycle and is highest during M phase. Autophosphorylated at Thr-281 upon TPX2 binding. Thr-281 can be phosphorylated by several kinases, including PAK and PKA. Protein phosphatase type 1 (PP1) binds AURKA and inhibits its activity by dephosphorylating Thr-281 during mitosis. Phosphorylation at Ser-335 decreases the kinase activity. PPP2CA controls degradation by dephosphorylating Ser-52 at the end of mitosis. Phosphorylated in embryonic brain neurons. In terms of processing, ubiquitinated by CHFR, leading to its degradation by the proteasome. Ubiquitinated by the anaphase-promoting complex (APC), leading to its degradation by the proteasome. Ubiquitinated by the E3 ubiquitin-protein ligase complex SCF(FBXL7) during mitosis, leading to its degradation by the proteasome. Ubiquitinated by the CUL3-KLHL18 ligase leading to its activation at the centrosome which is required for initiating mitotic entry. Ubiquitination mediated by CUL3-KLHL18 ligase does not lead to its degradation by the proteasome. Detected in neurons in brain cortex and hippocampus (at protein level). Expressed in mammary gland and tumor.

It localises to the cytoplasm. The protein localises to the cytoskeleton. It is found in the microtubule organizing center. The protein resides in the centrosome. Its subcellular location is the spindle pole. It localises to the centriole. The protein localises to the cell projection. It is found in the neuron projection. The protein resides in the cilium. Its subcellular location is the cilium basal body. It localises to the basolateral cell membrane. It carries out the reaction L-seryl-[protein] + ATP = O-phospho-L-seryl-[protein] + ADP + H(+). The enzyme catalyses L-threonyl-[protein] + ATP = O-phospho-L-threonyl-[protein] + ADP + H(+). Its activity is regulated as follows. Activation of CDK1, appears to be an upstream event of AURKA activation. Phosphatase inhibitor-2 (PPP1R2) and TPX2 act also as activators. Inactivated by the G2 checkpoint. Inhibited by GADD45A and p53/TP53, and through dephosphorylation by protein phosphatase type 1 (PP1). MLN8054 is also a potent and selective inhibitor. Activated during the early phase of cilia disassembly in the presence of FBXL7 and CIMAP3. Inhibited by the small molecule inhibitor VX-680. Functionally, mitotic serine/threonine kinase that contributes to the regulation of cell cycle progression. Associates with the centrosome and the spindle microtubules during mitosis and plays a critical role in various mitotic events including the establishment of mitotic spindle, centrosome duplication, centrosome separation as well as maturation, chromosomal alignment, spindle assembly checkpoint, and cytokinesis. Required for normal spindle positioning during mitosis and for the localization of NUMA1 and DCTN1 to the cell cortex during metaphase. Required for initial activation of CDK1 at centrosomes. Phosphorylates numerous target proteins, including ARHGEF2, BORA, BRCA1, CDC25B, DLGP5, HDAC6, KIF2A, LATS2, NDEL1, PARD3, PPP1R2, PLK1, RASSF1, TACC3, p53/TP53 and TPX2. Phosphorylates MCRS1 which is required for MCRS1-mediated kinetochore fiber assembly and mitotic progression. Regulates KIF2A tubulin depolymerase activity. Required for normal axon formation. Plays a role in microtubule remodeling during neurite extension. Important for microtubule formation and/or stabilization. Also acts as a key regulatory component of the p53/TP53 pathway, and particularly the checkpoint-response pathways critical for oncogenic transformation of cells, by phosphorylating and stabilizating p53/TP53. Phosphorylates its own inhibitors, the protein phosphatase type 1 (PP1) isoforms, to inhibit their activity. Inhibits cilia outgrowth. Required for cilia disassembly via phosphorylation of HDAC6 and subsequent deacetylation of alpha-tubulin. Regulates protein levels of the anti-apoptosis protein BIRC5 by suppressing the expression of the SCF(FBXL7) E3 ubiquitin-protein ligase substrate adapter FBXL7 through the phosphorylation of the transcription factor FOXP1. This is Aurora kinase A from Rattus norvegicus (Rat).